We begin with the raw amino-acid sequence, 100 residues long: Noncompact myelin-associated protein (100 aa).

At 1–28 (MTTATTLGDAVFSLNMTRGEDALYKSSG) the chain is on the extracellular side. Residues 29–49 (AIVAAIVVVVIIIVTLVLILL) form a helical membrane-spanning segment. Residues 50 to 100 (KMYNRRMRTRRELEPKSPKPPVPPALDPSSNGSQQPATVTFDPANVHVETR) lie on the Cytoplasmic side of the membrane. Residues 58–100 (TRRELEPKSPKPPVPPALDPSSNGSQQPATVTFDPANVHVETR) form a disordered region.

Glycosylated. In terms of tissue distribution, found in the peripheral nervous system (PNS) Schwann cells (at protein level). Expressed in the PNS, primarily limited to Schwann cells.

It is found in the cell membrane. Plays a role in myelin formation. The sequence is that of Noncompact myelin-associated protein (Ncmap) from Mus musculus (Mouse).